We begin with the raw amino-acid sequence, 368 residues long: Anaphase-promoting complex subunit MND2 (368 aa).

Disordered regions lie at residues 140 to 167 (AQNAEGNNEEDFRQHDSREEDPRNNGSI) and 286 to 336 (RNPY…GITP). The segment covering 149 to 162 (EDFRQHDSREEDPR) has biased composition (basic and acidic residues). Phosphoserine is present on Ser-293.

It belongs to the APC15 family. In terms of assembly, the APC/C is composed of at least 13 subunits that stay tightly associated throughout the cell cycle: APC1, APC2, APC4, APC5, APC9, APC11, CDC16, CDC23, CDC26, CDC27, DOC1, MND2 and SWM1. MND2 interacts directly with APC1, APC5 and CDC23.

It functions in the pathway protein modification; protein ubiquitination. Functionally, component of the anaphase promoting complex/cyclosome (APC/C), a cell cycle-regulated E3 ubiquitin-protein ligase complex that controls progression through mitosis and the G1 phase of the cell cycle. The APC/C is thought to confer substrate specificity and, in the presence of ubiquitin-conjugating E2 enzymes, it catalyzes the formation of protein-ubiquitin conjugates that are subsequently degraded by the 26S proteasome. In early mitosis, the APC/C is activated by CDC20 and targets securin PDS1, the B-type cyclin CLB5, and other anaphase inhibitory proteins for proteolysis, thereby triggering the separation of sister chromatids at the metaphase-to-anaphase transition. In late mitosis and in G1, degradation of CLB5 allows activation of the APC/C by CDH1, which is needed to destroy CDC20 and the B-type cyclin CLB2 to allow exit from mitosis and creating the low CDK state necessary for cytokinesis and for reforming prereplicative complexes in G1 prior to another round of replication. This chain is Anaphase-promoting complex subunit MND2 (MND2), found in Saccharomyces cerevisiae (strain ATCC 204508 / S288c) (Baker's yeast).